The primary structure comprises 311 residues: Porphobilinogen deaminase (311 aa).

C242 is modified (S-(dipyrrolylmethanemethyl)cysteine).

The protein belongs to the HMBS family. Monomer. Dipyrromethane is required as a cofactor.

It carries out the reaction 4 porphobilinogen + H2O = hydroxymethylbilane + 4 NH4(+). The protein operates within porphyrin-containing compound metabolism; protoporphyrin-IX biosynthesis; coproporphyrinogen-III from 5-aminolevulinate: step 2/4. Its function is as follows. Tetrapolymerization of the monopyrrole PBG into the hydroxymethylbilane pre-uroporphyrinogen in several discrete steps. In Hahella chejuensis (strain KCTC 2396), this protein is Porphobilinogen deaminase.